The following is a 174-amino-acid chain: Disulfide bond formation protein B (174 aa).

The Cytoplasmic portion of the chain corresponds to 1–12; sequence MLNWIDTAPRRI. Residues 13–29 traverse the membrane as a helical segment; that stretch reads LALISAACVAMLAFGMY. At 30-47 the chain is on the periplasmic side; the sequence is LQHVVGLEPCPMCIVQRY. Cys39 and Cys42 are disulfide-bonded. A helical membrane pass occupies residues 48 to 64; the sequence is ALIGVAVFAGLASARGQ. The Cytoplasmic portion of the chain corresponds to 65–69; it reads KGWWM. A helical transmembrane segment spans residues 70–87; it reads TWSVLALVAAGFGAFVAA. Topologically, residues 88-143 are periplasmic; that stretch reads RQSWLQWYPPEIATCGRDFYGMIENYPISRAIPMIFRGSGDCTAVDWTFLGGSIAN. Cys102 and Cys129 are oxidised to a cystine. A helical transmembrane segment spans residues 144 to 162; the sequence is WSFVWFLLFAVLLLVLLVR. At 163–174 the chain is on the cytoplasmic side; it reads GGRGAPDTLARA.

It belongs to the DsbB family.

It is found in the cell inner membrane. Functionally, required for disulfide bond formation in some periplasmic proteins. Acts by oxidizing the DsbA protein. This Acidovorax sp. (strain JS42) protein is Disulfide bond formation protein B.